A 301-amino-acid chain; its full sequence is GTPase Era (301 aa).

One can recognise an Era-type G domain in the interval 4–173; the sequence is KAGFVALIGK…LECISKHLNP (170 aa). Residues 12–19 are G1; sequence GKPNAGKS. 12–19 contacts GTP; that stretch reads GKPNAGKS. The tract at residues 38-42 is G2; that stretch reads NATRK. The interval 64–67 is G3; sequence DTPG. GTP is bound by residues 64 to 68 and 122 to 125; these read DTPGL and SKID. Residues 122 to 125 are G4; the sequence is SKID. Residues 152–154 form a G5 region; the sequence is LSA. Positions 204-280 constitute a KH type-2 domain; that stretch reads LSDEIPYESD…FLNLQVIAQK (77 aa).

It belongs to the TRAFAC class TrmE-Era-EngA-EngB-Septin-like GTPase superfamily. Era GTPase family. In terms of assembly, monomer.

The protein resides in the cytoplasm. Its subcellular location is the cell inner membrane. In terms of biological role, an essential GTPase that binds both GDP and GTP, with rapid nucleotide exchange. Plays a role in 16S rRNA processing and 30S ribosomal subunit biogenesis and possibly also in cell cycle regulation and energy metabolism. This is GTPase Era from Helicobacter pylori (strain P12).